Consider the following 82-residue polypeptide: RNA-binding protein Hfq (82 aa).

The Sm domain maps to 11 to 72; the sequence is DTFLNAVRKS…ISTIAPSAPV (62 aa).

The protein belongs to the Hfq family. In terms of assembly, homohexamer.

Its function is as follows. RNA chaperone that binds small regulatory RNA (sRNAs) and mRNAs to facilitate mRNA translational regulation in response to envelope stress, environmental stress and changes in metabolite concentrations. Also binds with high specificity to tRNAs. The polypeptide is RNA-binding protein Hfq (Hyphomonas neptunium (strain ATCC 15444)).